A 415-amino-acid chain; its full sequence is Diaminopimelate decarboxylase (415 aa).

K60 carries the N6-(pyridoxal phosphate)lysine modification. Residues G239 and 274–277 (EPGR) each bind pyridoxal 5'-phosphate. Substrate-binding residues include R277, R313, and Y317. The active-site Proton donor is C344. Substrate contacts are provided by E345 and Y372. Y372 is a binding site for pyridoxal 5'-phosphate.

Belongs to the Orn/Lys/Arg decarboxylase class-II family. LysA subfamily. Homodimer. It depends on pyridoxal 5'-phosphate as a cofactor.

It carries out the reaction meso-2,6-diaminopimelate + H(+) = L-lysine + CO2. It functions in the pathway amino-acid biosynthesis; L-lysine biosynthesis via DAP pathway; L-lysine from DL-2,6-diaminopimelate: step 1/1. Its function is as follows. Specifically catalyzes the decarboxylation of meso-diaminopimelate (meso-DAP) to L-lysine. The sequence is that of Diaminopimelate decarboxylase from Haemophilus influenzae (strain ATCC 51907 / DSM 11121 / KW20 / Rd).